A 265-amino-acid chain; its full sequence is Lipopolysaccharide core heptose(I) kinase WaaP (265 aa).

Residue Asp162 is part of the active site.

Belongs to the protein kinase superfamily. KdkA/RfaP family. Requires Mg(2+) as cofactor.

Its subcellular location is the cell inner membrane. It catalyses the reaction an L-alpha-D-Hep-(1-&gt;3)-L-alpha-D-Hep-(1-&gt;5)-[alpha-Kdo-(2-&gt;4)]-alpha-Kdo-(2-&gt;6)-lipid A + ATP = an L-alpha-D-Hep-(1-&gt;3)-4-O-phospho-L-alpha-D-Hep-(1-&gt;5)-[alpha-Kdo-(2-&gt;4)]-alpha-Kdo-(2-&gt;6)-lipid A + ADP + H(+). The enzyme catalyses L-alpha-D-Hep-(1-&gt;3)-L-alpha-D-Hep-(1-&gt;5)-[alpha-Kdo-(2-&gt;4)]-alpha-Kdo-(2-&gt;6)-lipid A (E. coli) + ATP = L-alpha-D-Hep-(1-&gt;3)-4-O-phospho-L-alpha-D-Hep-(1-&gt;5)-[alpha-Kdo-(2-&gt;4)]-alpha-Kdo-(2-&gt;6)-lipid A (E. coli) + ADP + H(+). Its pathway is bacterial outer membrane biogenesis; LPS core biosynthesis. Functionally, kinase involved in the biosynthesis of the core oligosaccharide region of lipopolysaccharide (LPS). Catalyzes the phosphorylation of heptose I (HepI), the first heptose added to the Kdo2-lipid A module. This chain is Lipopolysaccharide core heptose(I) kinase WaaP, found in Escherichia coli.